Consider the following 151-residue polypeptide: SsrA-binding protein (151 aa).

It belongs to the SmpB family.

It localises to the cytoplasm. In terms of biological role, required for rescue of stalled ribosomes mediated by trans-translation. Binds to transfer-messenger RNA (tmRNA), required for stable association of tmRNA with ribosomes. tmRNA and SmpB together mimic tRNA shape, replacing the anticodon stem-loop with SmpB. tmRNA is encoded by the ssrA gene; the 2 termini fold to resemble tRNA(Ala) and it encodes a 'tag peptide', a short internal open reading frame. During trans-translation Ala-aminoacylated tmRNA acts like a tRNA, entering the A-site of stalled ribosomes, displacing the stalled mRNA. The ribosome then switches to translate the ORF on the tmRNA; the nascent peptide is terminated with the 'tag peptide' encoded by the tmRNA and targeted for degradation. The ribosome is freed to recommence translation, which seems to be the essential function of trans-translation. This is SsrA-binding protein from Geotalea uraniireducens (strain Rf4) (Geobacter uraniireducens).